The sequence spans 130 residues: MNFNDIETMVKSKFKDIKKHAEEIAHEIEVRSGYLRKAEQYKRLEFNLSFALDDIESTAKDVQTAKTSANKDSVTVKGKAPNTLYIEKRNLMKQKLEMLGEDIDKNKESLQKAKEIAGEKASEYFNKAMN.

Belongs to the EsxC family.

The protein resides in the secreted. This Staphylococcus aureus (strain MSSA476) protein is ESAT-6 secretion system extracellular protein C.